A 299-amino-acid chain; its full sequence is Formamidopyrimidine-DNA glycosylase (299 aa).

The active-site Schiff-base intermediate with DNA is the P2. Catalysis depends on E3, which acts as the Proton donor. The Proton donor; for beta-elimination activity role is filled by K58. DNA contacts are provided by H106, R125, and K168. An FPG-type zinc finger spans residues 259-295 (RVYDRVGHACPTKGCTGRVGRIVQGGRSTFFCETCQV). R285 (proton donor; for delta-elimination activity) is an active-site residue.

Belongs to the FPG family. In terms of assembly, monomer. It depends on Zn(2+) as a cofactor.

The enzyme catalyses Hydrolysis of DNA containing ring-opened 7-methylguanine residues, releasing 2,6-diamino-4-hydroxy-5-(N-methyl)formamidopyrimidine.. It catalyses the reaction 2'-deoxyribonucleotide-(2'-deoxyribose 5'-phosphate)-2'-deoxyribonucleotide-DNA = a 3'-end 2'-deoxyribonucleotide-(2,3-dehydro-2,3-deoxyribose 5'-phosphate)-DNA + a 5'-end 5'-phospho-2'-deoxyribonucleoside-DNA + H(+). In terms of biological role, involved in base excision repair of DNA damaged by oxidation or by mutagenic agents. Acts as a DNA glycosylase that recognizes and removes damaged bases. Has a preference for oxidized purines, such as 7,8-dihydro-8-oxoguanine (8-oxoG). Has AP (apurinic/apyrimidinic) lyase activity and introduces nicks in the DNA strand. Cleaves the DNA backbone by beta-delta elimination to generate a single-strand break at the site of the removed base with both 3'- and 5'-phosphates. This chain is Formamidopyrimidine-DNA glycosylase, found in Methylorubrum extorquens (strain CM4 / NCIMB 13688) (Methylobacterium extorquens).